Here is a 20-residue protein sequence, read N- to C-terminus: Trypsin inhibitor (20 aa).

Residues 1-20 form a disordered region; it reads APSDTTIAETLTITEEFFPD.

Hemolymph.

The protein localises to the secreted. It localises to the extracellular space. Inhibits trypsin stoichiometrically. Also inhibits chymotrypsin very weakly. The sequence is that of Trypsin inhibitor from Mythimna unipuncta (Armyworm moth).